The primary structure comprises 144 residues: Large ribosomal subunit protein uL15 (144 aa).

The segment at 1-48 (MQLNNLKPAAGSKHAKRRVGRGIGSGLGKTAGRGHKGQKSRSGGFHKV) is disordered. The segment covering 21–31 (RGIGSGLGKTA) has biased composition (gly residues).

The protein belongs to the universal ribosomal protein uL15 family. As to quaternary structure, part of the 50S ribosomal subunit.

Its function is as follows. Binds to the 23S rRNA. This chain is Large ribosomal subunit protein uL15, found in Cupriavidus pinatubonensis (strain JMP 134 / LMG 1197) (Cupriavidus necator (strain JMP 134)).